A 539-amino-acid polypeptide reads, in one-letter code: Protoporphyrinogen oxidase (539 aa).

Residues 18-23 (GGGVSG), 43-44 (ES), tryptophan 51, 70-73 (GPRT), valine 300, and 521-523 (PGV) each bind FAD.

Belongs to the protoporphyrinogen/coproporphyrinogen oxidase family. Protoporphyrinogen oxidase subfamily. Requires FAD as cofactor.

It is found in the mitochondrion inner membrane. It catalyses the reaction protoporphyrinogen IX + 3 O2 = protoporphyrin IX + 3 H2O2. The protein operates within porphyrin-containing compound metabolism; protoporphyrin-IX biosynthesis; protoporphyrin-IX from protoporphyrinogen-IX: step 1/1. Functionally, catalyzes the 6-electron oxidation of protoporphyrinogen-IX to form protoporphyrin-IX. The sequence is that of Protoporphyrinogen oxidase from Saccharomyces cerevisiae (strain ATCC 204508 / S288c) (Baker's yeast).